Here is a 363-residue protein sequence, read N- to C-terminus: GTPase Obg (363 aa).

One can recognise an Obg domain in the interval 1-159; sequence MKFLDEAKVY…KTIWLRLKLI (159 aa). The OBG-type G domain occupies 160–327; sequence ADAGLVGLPN…VLRALRDIIV (168 aa). GTP-binding positions include 166-173, 191-195, 212-215, 279-282, and 308-310; these read GLPNAGKS, FTTLH, DIPG, SQID, and SAV. Positions 173 and 193 each coordinate Mg(2+). The interval 332–363 is disordered; that stretch reads EEKPAKAPKLRHRDMIVSEENNQGEDGADDQP. Residues 353–363 show a composition bias toward acidic residues; it reads NQGEDGADDQP.

It belongs to the TRAFAC class OBG-HflX-like GTPase superfamily. OBG GTPase family. In terms of assembly, monomer. The cofactor is Mg(2+).

The protein localises to the cytoplasm. Functionally, an essential GTPase which binds GTP, GDP and possibly (p)ppGpp with moderate affinity, with high nucleotide exchange rates and a fairly low GTP hydrolysis rate. Plays a role in control of the cell cycle, stress response, ribosome biogenesis and in those bacteria that undergo differentiation, in morphogenesis control. The protein is GTPase Obg of Rhizobium etli (strain ATCC 51251 / DSM 11541 / JCM 21823 / NBRC 15573 / CFN 42).